Reading from the N-terminus, the 582-residue chain is Multicopper oxidase LPR1 homolog 1 (582 aa).

An N-terminal signal peptide occupies residues 1 to 20; that stretch reads MRAKVELAVLLLVLVGVAAG. Cu cation contacts are provided by His-150, His-152, His-198, and His-200. N-linked (GlcNAc...) asparagine glycans are attached at residues Asn-256, Asn-300, and Asn-308. A Plastocyanin-like domain is found at 285–354; sequence PFLAVARRRY…DVVVDFSQST (70 aa). Cu cation-binding residues include His-467, His-470, and His-472. A glycan (N-linked (GlcNAc...) asparagine) is linked at Asn-504. Cu cation-binding residues include His-563, Cys-564, His-565, His-569, and Met-574.

It belongs to the multicopper oxidase family. Cu cation is required as a cofactor. In terms of tissue distribution, highly expressed in roots, and at lower levels in basal stems and leaf blades.

Its subcellular location is the endoplasmic reticulum membrane. Its function is as follows. Multicopper oxidase that may play a role in the maintenance of inorganic phosphate homeostasis. The chain is Multicopper oxidase LPR1 homolog 1 from Oryza sativa subsp. japonica (Rice).